The sequence spans 564 residues: Urease subunit alpha (564 aa).

The region spanning 126–564 (GGIDTHIHFI…LPMAQRYFLF (439 aa)) is the Urease domain. Ni(2+) contacts are provided by histidine 131, histidine 133, and lysine 214. Lysine 214 is modified (N6-carboxylysine). Histidine 216 contacts substrate. Ni(2+) is bound by residues histidine 243 and histidine 269. Histidine 317 serves as the catalytic Proton donor. Position 357 (aspartate 357) interacts with Ni(2+).

The protein belongs to the metallo-dependent hydrolases superfamily. Urease alpha subunit family. As to quaternary structure, heterotrimer of UreA (gamma), UreB (beta) and UreC (alpha) subunits. Three heterotrimers associate to form the active enzyme. Ni cation serves as cofactor. In terms of processing, carboxylation allows a single lysine to coordinate two nickel ions.

It localises to the cytoplasm. It carries out the reaction urea + 2 H2O + H(+) = hydrogencarbonate + 2 NH4(+). The protein operates within nitrogen metabolism; urea degradation; CO(2) and NH(3) from urea (urease route): step 1/1. The chain is Urease subunit alpha from Burkholderia pseudomallei (strain 1710b).